Reading from the N-terminus, the 408-residue chain is Argininosuccinate synthase (408 aa).

ATP-binding positions include 10 to 18 and Ala37; that span reads AYSGGLDTS. Residues Tyr90 and Ser95 each contribute to the L-citrulline site. Gly120 serves as a coordination point for ATP. Residues Thr122, Asn126, and Asp127 each contribute to the L-aspartate site. Asn126 serves as a coordination point for L-citrulline. L-citrulline is bound by residues Arg130, Ser181, Ser190, Glu266, and Tyr278.

Belongs to the argininosuccinate synthase family. Type 1 subfamily. In terms of assembly, homotetramer.

The protein localises to the cytoplasm. It carries out the reaction L-citrulline + L-aspartate + ATP = 2-(N(omega)-L-arginino)succinate + AMP + diphosphate + H(+). The protein operates within amino-acid biosynthesis; L-arginine biosynthesis; L-arginine from L-ornithine and carbamoyl phosphate: step 2/3. The sequence is that of Argininosuccinate synthase from Laribacter hongkongensis (strain HLHK9).